The following is a 1220-amino-acid chain: Osmosensing histidine protein kinase SLN1 (1220 aa).

Residues 1–22 (MRFGLPSKLELTPPFRIGIRTQ) are Cytoplasmic-facing. A helical membrane pass occupies residues 23 to 46 (LTALVSIVALGSLIILAVTTGVYF). Topologically, residues 47–333 (TSNYKNLRSD…FLSPATKLAK (287 aa)) are extracellular. 6 N-linked (GlcNAc...) asparagine glycosylation sites follow: Asn-100, Asn-138, Asn-142, Asn-181, Asn-224, and Asn-272. A helical membrane pass occupies residues 334 to 354 (IITGTVIAIGVFVILLTLPLA). Residues 355 to 1220 (HWAVQPIVRL…AAYQGKKNNK (866 aa)) lie on the Cytoplasmic side of the membrane. Disordered regions lie at residues 414-433 (GSTT…GAAF) and 444-500 (NLGN…HILT). Residues 451–468 (SPPEEENKIPNNHTDAKI) show a composition bias toward basic and acidic residues. The residue at position 502 (Ser-502) is a Phosphoserine. The 356-residue stretch at 573–928 (NISHELRTPL…KFTFTLPLNQ (356 aa)) folds into the Histidine kinase domain. His-576 carries the post-translational modification Phosphohistidine; by autocatalysis. Ser-758 and Ser-833 each carry phosphoserine. 2 disordered regions span residues 960–1016 (AKSI…DNGG) and 1040–1081 (NSLS…VKDD). Residues 965 to 984 (SRQSTSSVATPATNRSSLTN) are compositionally biased toward polar residues. Positions 988-1000 (PEVRSKGKHETKD) are enriched in basic and acidic residues. Phosphoserine is present on residues Ser-1041 and Ser-1044. Residues 1063–1075 (LQSTGTATSSRNI) show a composition bias toward polar residues. A Response regulatory domain is found at 1089-1210 (KILVVEDNHV…KLKTILTEFC (122 aa)). The Mg(2+) site is built by Glu-1094, Asp-1095, Asp-1144, and Lys-1195. Asp-1144 carries the 4-aspartylphosphate modification.

Interacts with DJP1, MOG1 and YPD1. In terms of processing, the phosphorelay mechanism involves the sequential transfer of a phosphate group from His-576 (H1) in the histidine kinase domain (transmitter domain) to Asp-1144 (D1) of the response regulatory domain (receiver domain). This transfer probably occurs between two SLN1 molecules, rather than intramolecularly. The phosphate group is further transferred to 'His-64' (H2) of YPD1 and finally to 'Asp-554' (D2) of SSK1 or 'Asp-427' (D2) of SKN7.

The protein resides in the cell membrane. The enzyme catalyses ATP + protein L-histidine = ADP + protein N-phospho-L-histidine.. Its function is as follows. Histidine kinase that acts as an osmosensor at the plasma membrane. Part of the bifurcated SLN1-YPD1-SKN7/SSK1 two-component regulatory system, which controls activity of the HOG1 pathway and gene expression in response to changes in the osmolarity of the extracellular environment. Under normal osmotic conditions, the histidine kinase autophosphorylates His-576. This phosphate is subsequently transferred to Asp-1144, from where it is relayed to 'His-64' of the phosphorelay intermediate protein YPD1. Under high osmolarity conditions, the histidine kinase is no longer active. This is Osmosensing histidine protein kinase SLN1 (SLN1) from Saccharomyces cerevisiae (strain ATCC 204508 / S288c) (Baker's yeast).